A 335-amino-acid chain; its full sequence is Biotin synthase (335 aa).

The region spanning 47-276 (FYGKKVKLNM…SKEIRISGGR (230 aa)) is the Radical SAM core domain. 3 residues coordinate [4Fe-4S] cluster: C65, C69, and C72. Positions 109, 141, 201, and 271 each coordinate [2Fe-2S] cluster.

It belongs to the radical SAM superfamily. Biotin synthase family. As to quaternary structure, homodimer. The cofactor is [4Fe-4S] cluster. [2Fe-2S] cluster serves as cofactor.

It catalyses the reaction (4R,5S)-dethiobiotin + (sulfur carrier)-SH + 2 reduced [2Fe-2S]-[ferredoxin] + 2 S-adenosyl-L-methionine = (sulfur carrier)-H + biotin + 2 5'-deoxyadenosine + 2 L-methionine + 2 oxidized [2Fe-2S]-[ferredoxin]. The protein operates within cofactor biosynthesis; biotin biosynthesis; biotin from 7,8-diaminononanoate: step 2/2. Functionally, catalyzes the conversion of dethiobiotin (DTB) to biotin by the insertion of a sulfur atom into dethiobiotin via a radical-based mechanism. This Bacillus subtilis subsp. natto protein is Biotin synthase.